The chain runs to 379 residues: PqqA peptide cyclase (379 aa).

Residues 8-220 (LPAPIGLLAE…IRVVEEARER (213 aa)) enclose the Radical SAM core domain. [4Fe-4S] cluster contacts are provided by cysteine 22, cysteine 26, and cysteine 29.

Belongs to the radical SAM superfamily. PqqE family. As to quaternary structure, interacts with PqqD. The interaction is necessary for activity of PqqE. The cofactor is [4Fe-4S] cluster.

It catalyses the reaction [PQQ precursor protein] + S-adenosyl-L-methionine = E-Y cross-linked-[PQQ precursor protein] + 5'-deoxyadenosine + L-methionine + H(+). It participates in cofactor biosynthesis; pyrroloquinoline quinone biosynthesis. Functionally, catalyzes the cross-linking of a glutamate residue and a tyrosine residue in the PqqA protein as part of the biosynthesis of pyrroloquinoline quinone (PQQ). The protein is PqqA peptide cyclase of Methylobacterium sp. (strain 4-46).